The following is a 174-amino-acid chain: Crossover junction endodeoxyribonuclease RuvC (174 aa).

Residues D8, E67, and D139 contribute to the active site. Residues D8, E67, and D139 each coordinate Mg(2+).

It belongs to the RuvC family. In terms of assembly, homodimer which binds Holliday junction (HJ) DNA. The HJ becomes 2-fold symmetrical on binding to RuvC with unstacked arms; it has a different conformation from HJ DNA in complex with RuvA. In the full resolvosome a probable DNA-RuvA(4)-RuvB(12)-RuvC(2) complex forms which resolves the HJ. Requires Mg(2+) as cofactor.

The protein localises to the cytoplasm. It catalyses the reaction Endonucleolytic cleavage at a junction such as a reciprocal single-stranded crossover between two homologous DNA duplexes (Holliday junction).. The RuvA-RuvB-RuvC complex processes Holliday junction (HJ) DNA during genetic recombination and DNA repair. Endonuclease that resolves HJ intermediates. Cleaves cruciform DNA by making single-stranded nicks across the HJ at symmetrical positions within the homologous arms, yielding a 5'-phosphate and a 3'-hydroxyl group; requires a central core of homology in the junction. The consensus cleavage sequence is 5'-(A/T)TT(C/G)-3'. Cleavage occurs on the 3'-side of the TT dinucleotide at the point of strand exchange. HJ branch migration catalyzed by RuvA-RuvB allows RuvC to scan DNA until it finds its consensus sequence, where it cleaves and resolves the cruciform DNA. This is Crossover junction endodeoxyribonuclease RuvC from Pseudomonas aeruginosa (strain LESB58).